A 105-amino-acid chain; its full sequence is U21-theraphotoxin-Cg1a 4 (105 aa).

An N-terminal signal peptide occupies residues 1–21 (MKVSVLITLAVLGVMFLLTSA). Residues 22-48 (EERGSDQMDSPAWLKSMEIIFQSEERE) constitute a propeptide that is removed on maturation. 3 disulfides stabilise this stretch: Cys-49-Cys-63, Cys-56-Cys-68, and Cys-62-Cys-76. Val-82 is subject to Valine amide. Residues 83–105 (GKWEMLINMNIFRIVFSYSMCTV) constitute a propeptide that is removed on maturation.

This sequence belongs to the neurotoxin 10 (Hwtx-1) family. 05 (F4a) subfamily. In terms of tissue distribution, expressed by the venom gland.

It localises to the secreted. Functionally, probable ion channel inhibitor. This chain is U21-theraphotoxin-Cg1a 4, found in Chilobrachys guangxiensis (Chinese earth tiger tarantula).